A 653-amino-acid chain; its full sequence is Epithelial sodium channel subunit gamma (653 aa).

Topologically, residues 1–54 (MGHGRRISESIKKQLPVTGPEAPTVKNLMDWYLNNTNTHGCRRIAVSRGYLRRW) are cytoplasmic. The chain crosses the membrane as a helical span at residues 55-75 (IWICFTVSSVGMIFWQWTLLL). The Extracellular portion of the chain corresponds to 76–546 (MSYYTVSVSV…GGQLGLWMSC (471 aa)). 8 cysteine pairs are disulfide-bonded: cysteine 100/cysteine 290, cysteine 214/cysteine 221, cysteine 267/cysteine 274, cysteine 379/cysteine 464, cysteine 401/cysteine 460, cysteine 405/cysteine 456, cysteine 414/cysteine 441, and cysteine 416/cysteine 430. A helical transmembrane segment spans residues 547 to 567 (SIVCFLEMWEVFLVDILTIIA). Over 568-653 (RYWLHRGRQW…DEQVSDTEVN (86 aa)) the chain is Cytoplasmic. Residues 582–608 (KERQMQQPSPPDHDTGHHNPVCIDDED) form a disordered region.

It belongs to the amiloride-sensitive sodium channel (TC 1.A.6) family. SCNN1G subfamily. Component of the heterotrimeric epithelial sodium channel (ENaC) composed of an alpha/SCNN1A, a beta/SCNN1B and a gamma/SCNN1G subunit. Strongly expressed in gill, liver, kidney and rectum and more weakly in heart, muscle and intestine.

It is found in the apical cell membrane. The catalysed reaction is Na(+)(in) = Na(+)(out). Its activity is regulated as follows. Originally identified and characterized by its inhibition by the diuretic drug amiloride. Functionally, this is one of the three pore-forming subunits of the heterotrimeric epithelial sodium channel (ENaC), a critical regulator of sodium balance and fluid homeostasis. ENaC operates in epithelial tissues, where it mediates the electrodiffusion of sodium ions from extracellular fluid through the apical membrane of cells, with water following osmotically. The polypeptide is Epithelial sodium channel subunit gamma (Neoceratodus forsteri (Australian lungfish)).